The chain runs to 3511 residues: Unconventional myosin-XV (3511 aa).

4 disordered regions span residues 1–44 (MADE…TPKI), 574–690 (KKPI…SLRQ), 712–1030 (FAEP…PNKN), and 1105–1135 (VSSFRPKGPAPVQPPEHPDQDPEQGPAPQAC). The span at 622-634 (SQPQARNNNNSHG) shows a compositional bias: polar residues. Over residues 654–672 (PPMPAPSPSPASPLTPPFS) the composition is skewed to pro residues. A compositionally biased stretch (low complexity) spans 769 to 792 (PSLRSLPGQGYHSPLGPLSPQLSL). Pro residues predominate over residues 797–807 (FQPPFPPPPRR). The Myosin motor domain occupies 1206–1883 (DGVEDMTQLE…LHQLLESMRE (678 aa)). Position 1299-1306 (1299-1306 (GESGSGKT)) interacts with ATP. Residues 1307-1334 (EATKLILRCLAAMNQRRDVMQQIKILEA) are a coiled coil. Positions 1776–1783 (FVRCLKPN) are actin-binding. The neck or regulatory domain stretch occupies residues 1872–2013 (EHLHQLLESM…SSGPRVAVVR (142 aa)). 2 consecutive IQ domains span residues 1886–1908 (QNRAALTLQRYLRGFFIQRHFRS) and 1909–1938 (LRRKIILLQSRARGFLARQRYQQMRQSLLK). The segment at 2014–3511 (APRLQAEPCV…TLPPSEITLL (1498 aa)) is tail. The 147-residue stretch at 2049 to 2195 (MLTVPLKMPL…PTQLEWTAIQ (147 aa)) folds into the MyTH4 1 domain. 5 disordered regions span residues 2330-2359 (SHKEDGTNGETEAQRWTSNRQAVDSIGEST), 2392-2425 (YRMKGGGQPGGGGGSTSEDTSRRPPEPKLKPIPG), 2460-2509 (PLSA…SVAK), 2565-2584 (KQPPWAGHPEARRTDGGKVF), and 2629-2648 (RPCMGPTPVQPSRSLEPPED). Residues 2337–2351 (NGETEAQRWTSNRQA) are compositionally biased toward polar residues. A compositionally biased stretch (gly residues) spans 2395 to 2406 (KGGGQPGGGGGS). Residues 2410–2420 (DTSRRPPEPKL) show a composition bias toward basic and acidic residues. Positions 2573–2584 (PEARRTDGGKVF) are enriched in basic and acidic residues. An SH3 domain is found at 2848–2934 (KDSDYVVAVR…PSELVQPAAA (87 aa)). Positions 2964-2984 (EVGRRREGPPVRARSADSGED) are disordered. The segment covering 2965 to 2980 (VGRRREGPPVRARSAD) has biased composition (basic and acidic residues). Positions 3031–3185 (FTKVPIQESL…PSNMELRAML (155 aa)) constitute a MyTH4 2 domain. Residues 3190–3511 (SKRQLFLLPG…TLPPSEITLL (322 aa)) enclose the FERM domain.

This sequence belongs to the TRAFAC class myosin-kinesin ATPase superfamily. Myosin family. As to quaternary structure, interacts with the third PDZ domain of WHRN which is necessary for localization of WHRN to stereocilium tips. Interacts with FASLG. Interacts with EPS8. In the developing inner ear, expressed in cochlea and vestibular apparatus. Expression appears to be restricted to cochlear neurosensory cells and upper epithelial layer of macula saccula. Also expressed in macula utriculi and cristae ampullaris of the semicircular canals. In adult cochlear hair cells, highest expression in stereocilia and apical body.

The protein localises to the cell projection. The protein resides in the stereocilium. Its subcellular location is the cytoplasm. It is found in the cytoskeleton. Its function is as follows. Myosins are actin-based motor molecules with ATPase activity. Unconventional myosins serve in intracellular movements. Their highly divergent tails are presumed to bind to membranous compartments, which would be moved relative to actin filaments. Required for the arrangement of stereocilia in mature hair bundles. The protein is Unconventional myosin-XV (Myo15a) of Mus musculus (Mouse).